A 358-amino-acid chain; its full sequence is MLYHLLYPLAGDVKLFNIFKYLTFRTIYAMITALLVCFVLGPWVIRVLEGLQARQVIRTDGPESHLQKQGTPTMGGVMILAAIVIPTLLWADLSNQYIWTVLFITIGYGLIGFVDDYKKVVEKNPKGLSPRQKMFWQVLLAGAVGTFLFLKPGFNAQLFVPFFKNFHPDLWFWYIPFVTLVIVGASNAVNLTDGLDGLAIGPVAINAATYMLFSYVAGHATLSAYLQVPRVAGAGELAVLCGAMVGAGLGFLWYNSYPAEVFMGDVGSLSLGGTLGAIAVITKQEILLVIVGGIFVIEALSVIFQVGSYKYRGKRIFRMAPIHHHFELKGVAEPKIIVRFWIITIILALVAISTLKMR.

10 helical membrane passes run 27-47 (IYAM…VIRV), 73-93 (TMGG…WADL), 97-117 (YIWT…VDDY), 134-154 (MFWQ…KPGF), 170-190 (LWFW…NAVN), 197-217 (GLAI…SYVA), 233-253 (GAGE…GFLW), 261-281 (VFMG…IAVI), 286-306 (ILLV…IFQV), and 335-355 (KIIV…ISTL).

It belongs to the glycosyltransferase 4 family. MraY subfamily. Mg(2+) serves as cofactor.

Its subcellular location is the cell inner membrane. The catalysed reaction is UDP-N-acetyl-alpha-D-muramoyl-L-alanyl-gamma-D-glutamyl-meso-2,6-diaminopimeloyl-D-alanyl-D-alanine + di-trans,octa-cis-undecaprenyl phosphate = di-trans,octa-cis-undecaprenyl diphospho-N-acetyl-alpha-D-muramoyl-L-alanyl-D-glutamyl-meso-2,6-diaminopimeloyl-D-alanyl-D-alanine + UMP. It functions in the pathway cell wall biogenesis; peptidoglycan biosynthesis. In terms of biological role, catalyzes the initial step of the lipid cycle reactions in the biosynthesis of the cell wall peptidoglycan: transfers peptidoglycan precursor phospho-MurNAc-pentapeptide from UDP-MurNAc-pentapeptide onto the lipid carrier undecaprenyl phosphate, yielding undecaprenyl-pyrophosphoryl-MurNAc-pentapeptide, known as lipid I. The sequence is that of Phospho-N-acetylmuramoyl-pentapeptide-transferase from Pelobacter propionicus (strain DSM 2379 / NBRC 103807 / OttBd1).